The sequence spans 281 residues: Feruloyl esterase A (281 aa).

An N-terminal signal peptide occupies residues methionine 1–alanine 21. Cystine bridges form between cysteine 50–cysteine 279, cysteine 112–cysteine 115, and cysteine 248–cysteine 255. Position 98 (aspartate 98) interacts with substrate. An N-linked (GlcNAc...) asparagine glycan is attached at asparagine 100. Tyrosine 101 serves as a coordination point for substrate. Serine 154 (nucleophile) is an active-site residue. Residue aspartate 215 is the Charge relay system of the active site. Residue histidine 268 participates in substrate binding. Histidine 268 functions as the Charge relay system in the catalytic mechanism.

In terms of processing, glycosylated.

The protein localises to the secreted. The catalysed reaction is feruloyl-polysaccharide + H2O = ferulate + polysaccharide.. Inhibited by the specific serine esterase inhibitor diisopropylfluorophosphate. Involved in degradation of plant cell walls. Hydrolyzes the feruloyl-arabinose ester bond in arabinoxylans, and the feruloyl-galactose ester bond in pectin. Binds to cellulose. This Aspergillus niger protein is Feruloyl esterase A (faeA).